A 152-amino-acid polypeptide reads, in one-letter code: Siroheme decarboxylase NirD subunit (152 aa).

This sequence belongs to the Ahb/Nir family. Probably forms a complex composed of NirD, NirL, NirG and NirH. All proteins are required for the total conversion of siroheme to didecarboxysiroheme.

The catalysed reaction is siroheme + 2 H(+) = 12,18-didecarboxysiroheme + 2 CO2. The protein operates within porphyrin-containing compound metabolism. Its function is as follows. Involved in heme d1 biosynthesis. Catalyzes the decarboxylation of siroheme into didecarboxysiroheme. In Stutzerimonas stutzeri (Pseudomonas stutzeri), this protein is Siroheme decarboxylase NirD subunit.